We begin with the raw amino-acid sequence, 352 residues long: Molybdenum import ATP-binding protein ModC (352 aa).

The region spanning 1–229 is the ABC transporter domain; that stretch reads MLELNFSQTL…SVMNPWLPKE (229 aa). Position 31–38 (31–38) interacts with ATP; it reads GVSGAGKT. In terms of domain architecture, Mop spans 289 to 352; the sequence is QTSIRNVLRA…AQIKSVSITA (64 aa).

The protein belongs to the ABC transporter superfamily. Molybdate importer (TC 3.A.1.8) family. In terms of assembly, the complex is composed of two ATP-binding proteins (ModC), two transmembrane proteins (ModB) and a solute-binding protein (ModA).

Its subcellular location is the cell inner membrane. It carries out the reaction molybdate(out) + ATP + H2O = molybdate(in) + ADP + phosphate + H(+). In terms of biological role, part of the ABC transporter complex ModABC involved in molybdenum import. Responsible for energy coupling to the transport system. This is Molybdenum import ATP-binding protein ModC from Shigella flexneri.